Consider the following 332-residue polypeptide: Anthranilate phosphoribosyltransferase (332 aa).

Residues Gly-78, 81–82 (GD), Ser-86, 88–91 (NIST), 106–114 (KHGNKSITS), and Ser-118 each bind 5-phospho-alpha-D-ribose 1-diphosphate. Gly-78 is an anthranilate binding site. Ser-90 lines the Mg(2+) pocket. Position 109 (Asn-109) interacts with anthranilate. Arg-163 provides a ligand contact to anthranilate. Asp-222 and Glu-223 together coordinate Mg(2+).

The protein belongs to the anthranilate phosphoribosyltransferase family. Homodimer. Mg(2+) is required as a cofactor.

It catalyses the reaction N-(5-phospho-beta-D-ribosyl)anthranilate + diphosphate = 5-phospho-alpha-D-ribose 1-diphosphate + anthranilate. Its pathway is amino-acid biosynthesis; L-tryptophan biosynthesis; L-tryptophan from chorismate: step 2/5. Catalyzes the transfer of the phosphoribosyl group of 5-phosphorylribose-1-pyrophosphate (PRPP) to anthranilate to yield N-(5'-phosphoribosyl)-anthranilate (PRA). This Staphylococcus aureus (strain USA300) protein is Anthranilate phosphoribosyltransferase.